Here is a 193-residue protein sequence, read N- to C-terminus: Outer-membrane lipoprotein LolB (193 aa).

An N-terminal signal peptide occupies residues 1–21; it reads MRPARRFLAALACVAGALLSA. Cys22 carries N-palmitoyl cysteine lipidation. Cys22 carries S-diacylglycerol cysteine lipidation.

The protein belongs to the LolB family. As to quaternary structure, monomer.

It is found in the cell outer membrane. In terms of biological role, plays a critical role in the incorporation of lipoproteins in the outer membrane after they are released by the LolA protein. The chain is Outer-membrane lipoprotein LolB from Azoarcus sp. (strain BH72).